Here is a 193-residue protein sequence, read N- to C-terminus: Molybdopterin synthase catalytic subunit (193 aa).

Residues 118 to 119 (HR), lysine 134, and 141 to 143 (KKE) contribute to the substrate site. Positions 159 to 193 (DRTTTDGTTASSPAPATRPAKGGGCCGSKVRANES) are disordered. Low complexity predominate over residues 163–178 (TDGTTASSPAPATRPA).

This sequence belongs to the MoaE family. MOCS2B subfamily. In terms of assembly, heterotetramer; composed of 2 small (MOCS2A) and 2 large (MOCS2B) subunits.

It is found in the cytoplasm. The enzyme catalyses 2 [molybdopterin-synthase sulfur-carrier protein]-C-terminal-Gly-aminoethanethioate + cyclic pyranopterin phosphate + H2O = molybdopterin + 2 [molybdopterin-synthase sulfur-carrier protein]-C-terminal Gly-Gly + 2 H(+). It functions in the pathway cofactor biosynthesis; molybdopterin biosynthesis. Functionally, catalytic subunit of the molybdopterin synthase complex, a complex that catalyzes the conversion of precursor Z into molybdopterin. Acts by mediating the incorporation of 2 sulfur atoms from thiocarboxylated MOCS2A into precursor Z to generate a dithiolene group. In Oryza sativa subsp. indica (Rice), this protein is Molybdopterin synthase catalytic subunit.